Here is a 137-residue protein sequence, read N- to C-terminus: Small ribosomal subunit protein uS11 (137 aa).

Over residues 1-11 the composition is skewed to polar residues; sequence MPPKSRSTGPK. Disordered regions lie at residues 1 to 28 and 117 to 137; these read MPPK…PHGA and TISD…RRRV. Over residues 12–21 the composition is skewed to basic residues; that stretch reads KTQKARRRDK.

The protein belongs to the universal ribosomal protein uS11 family. Part of the 30S ribosomal subunit. Interacts with proteins S7 and S18. Binds to IF-3.

Located on the platform of the 30S subunit, it bridges several disparate RNA helices of the 16S rRNA. Forms part of the Shine-Dalgarno cleft in the 70S ribosome. The sequence is that of Small ribosomal subunit protein uS11 from Rhodococcus opacus (strain B4).